The chain runs to 155 residues: MYKIQLLSCIALTLALVANGAPTSSSTGNTMKEVKSLLLDLQLLLEKVKNPENLKLSRMHTFNFYMPKVNATELKHLKCLLEELKLLEEVLDLAPSKNLNTREIKDSMDNIKRIVLELQGSETRFTCEYDDATVKAVEFLNKWITFCQSIYSTMT.

Residues 1 to 20 (MYKIQLLSCIALTLALVANG) form the signal peptide. Residue threonine 23 is glycosylated (O-linked (GalNAc...) threonine). A disulfide bridge links cysteine 79 with cysteine 127.

This sequence belongs to the IL-2 family.

Its subcellular location is the secreted. Functionally, cytokine produced by activated CD4-positive helper T-cells and to a lesser extend activated CD8-positive T-cells and natural killer (NK) cells that plays pivotal roles in the immune response and tolerance. Binds to a receptor complex composed of either the high-affinity trimeric IL-2R (IL2RA/CD25, IL2RB/CD122 and IL2RG/CD132) or the low-affinity dimeric IL-2R (IL2RB and IL2RG). Interaction with the receptor leads to oligomerization and conformation changes in the IL-2R subunits resulting in downstream signaling starting with phosphorylation of JAK1 and JAK3. In turn, JAK1 and JAK3 phosphorylate the receptor to form a docking site leading to the phosphorylation of several substrates including STAT5. This process leads to activation of several pathways including STAT, phosphoinositide-3-kinase/PI3K and mitogen-activated protein kinase/MAPK pathways. Functions as a T-cell growth factor and can increase NK-cell cytolytic activity as well. Promotes strong proliferation of activated B-cells and subsequently immunoglobulin production. Plays a pivotal role in regulating the adaptive immune system by controlling the survival and proliferation of regulatory T-cells, which are required for the maintenance of immune tolerance. Moreover, participates in the differentiation and homeostasis of effector T-cell subsets, including Th1, Th2, Th17 as well as memory CD8-positive T-cells. The chain is Interleukin-2 (IL2) from Ovis aries (Sheep).